The following is a 243-amino-acid chain: 1-(5-phosphoribosyl)-5-[(5-phosphoribosylamino)methylideneamino] imidazole-4-carboxamide isomerase (243 aa).

Asp-8 functions as the Proton acceptor in the catalytic mechanism. Asp-130 functions as the Proton donor in the catalytic mechanism.

Belongs to the HisA/HisF family.

It localises to the cytoplasm. The catalysed reaction is 1-(5-phospho-beta-D-ribosyl)-5-[(5-phospho-beta-D-ribosylamino)methylideneamino]imidazole-4-carboxamide = 5-[(5-phospho-1-deoxy-D-ribulos-1-ylimino)methylamino]-1-(5-phospho-beta-D-ribosyl)imidazole-4-carboxamide. Its pathway is amino-acid biosynthesis; L-histidine biosynthesis; L-histidine from 5-phospho-alpha-D-ribose 1-diphosphate: step 4/9. In Acinetobacter baumannii (strain SDF), this protein is 1-(5-phosphoribosyl)-5-[(5-phosphoribosylamino)methylideneamino] imidazole-4-carboxamide isomerase.